Reading from the N-terminus, the 592-residue chain is Aspartate--tRNA(Asp/Asn) ligase (592 aa).

E173 is an L-aspartate binding site. The aspartate stretch occupies residues 197–200; that stretch reads QLFK. R219 provides a ligand contact to L-aspartate. Residues 219–221 and Q228 contribute to the ATP site; that span reads RDE. An L-aspartate-binding site is contributed by H451. Residue E486 participates in ATP binding. R493 provides a ligand contact to L-aspartate. Residue 538–541 coordinates ATP; the sequence is GLDR.

This sequence belongs to the class-II aminoacyl-tRNA synthetase family. Type 1 subfamily. In terms of assembly, homodimer.

It is found in the cytoplasm. The enzyme catalyses tRNA(Asx) + L-aspartate + ATP = L-aspartyl-tRNA(Asx) + AMP + diphosphate. Aspartyl-tRNA synthetase with relaxed tRNA specificity since it is able to aspartylate not only its cognate tRNA(Asp) but also tRNA(Asn). Reaction proceeds in two steps: L-aspartate is first activated by ATP to form Asp-AMP and then transferred to the acceptor end of tRNA(Asp/Asn). This Alkalilimnicola ehrlichii (strain ATCC BAA-1101 / DSM 17681 / MLHE-1) protein is Aspartate--tRNA(Asp/Asn) ligase.